A 207-amino-acid polypeptide reads, in one-letter code: 3-demethoxyubiquinol 3-hydroxylase (207 aa).

The Fe cation site is built by Glu56, Glu86, His89, Glu138, Glu170, and His173.

The protein belongs to the COQ7 family. The cofactor is Fe cation.

It is found in the cell membrane. The catalysed reaction is a 5-methoxy-2-methyl-3-(all-trans-polyprenyl)benzene-1,4-diol + AH2 + O2 = a 3-demethylubiquinol + A + H2O. It participates in cofactor biosynthesis; ubiquinone biosynthesis. Its function is as follows. Catalyzes the hydroxylation of 2-nonaprenyl-3-methyl-6-methoxy-1,4-benzoquinol during ubiquinone biosynthesis. This chain is 3-demethoxyubiquinol 3-hydroxylase, found in Cupriavidus taiwanensis (strain DSM 17343 / BCRC 17206 / CCUG 44338 / CIP 107171 / LMG 19424 / R1) (Ralstonia taiwanensis (strain LMG 19424)).